The chain runs to 756 residues: ATP-dependent DNA helicase Hel308 (756 aa).

Residues Q29 and S47 to T54 each bind ATP. Residues R34 to D201 form the Helicase ATP-binding domain. The DEAH box signature appears at D146–H149. Residues S233–S435 form the Helicase C-terminal domain.

This sequence belongs to the helicase family. Hel308 subfamily. In terms of assembly, monomer.

It carries out the reaction Couples ATP hydrolysis with the unwinding of duplex DNA by translocating in the 3'-5' direction.. The catalysed reaction is ATP + H2O = ADP + phosphate + H(+). Its function is as follows. DNA-dependent ATPase and 3'-5' DNA helicase that may be involved in repair of stalled replication forks. In Caldivirga maquilingensis (strain ATCC 700844 / DSM 13496 / JCM 10307 / IC-167), this protein is ATP-dependent DNA helicase Hel308.